The following is a 1467-amino-acid chain: Gag-Pol polyprotein (1467 aa).

G2 carries the N-myristoyl glycine; by host lipid modification. The Nuclear export signal motif lies at 16 to 22; that stretch reads FEHIRLR. Residues 26–32 carry the Nuclear localization signal motif; sequence KKKYQIK. A disordered region spans residues 116 to 144; it reads NAERNTTETSSGQKKNDKGVTVPPGGSQN. 2 CCHC-type zinc fingers span residues 402–419 and 423–440; these read VKCY…QCPE and MRCL…DCRG. The Peptidase A2 domain maps to 535–606; sequence IKALLDTGAD…TPINIIGRNL (72 aa). The For protease activity; shared with dimeric partner role is filled by D540. The region spanning 662 to 852 is the Reverse transcriptase domain; the sequence is EGKISRVGGE…PPYEWMGYKL (191 aa). Residues D728, D803, and D804 each contribute to the Mg(2+) site. Residues 845–853 are RT 'primer grip'; that stretch reads YEWMGYKLW. Positions 1015–1031 match the Tryptophan repeat motif motif; the sequence is WEQWWADYWQVSWIPEW. The RNase H type-1 domain maps to 1050–1173; it reads PIPKEDVYYV…IDKLVSKGIR (124 aa). Positions 1114 and 1165 each coordinate Mg(2+). The segment at 1179–1220 adopts an Integrase-type zinc-finger fold; that stretch reads EKIEEAQEKHERYHNNWKNLADTYGLPQIVAKEIVAMCPKCQ. Positions 1188, 1192, 1216, and 1219 each coordinate Zn(2+). The region spanning 1230–1380 is the Integrase catalytic domain; the sequence is VDASPGTWQM…TSAERLINII (151 aa). The Mg(2+) site is built by D1240 and D1292. Residues 1399–1446 constitute a DNA-binding region (integrase-type); the sequence is FRVYYREGRDPVWKGPAQLIWKGEGAVVLKDGSDLKVVPRRKAKIIKD. The tract at residues 1447–1467 is disordered; it reads YEPKQRVGNEGDVEGTRGSDN.

Homotrimer. Interacts with gp41 (via C-terminus). In terms of assembly, homodimer. The active site consists of two apposed aspartic acid residues. As to quaternary structure, heterodimer of p66 RT and p51 RT (RT p66/p51). Heterodimerization of RT is essential for DNA polymerase activity. Despite the sequence identities, p66 RT and p51 RT have distinct folding. Homotetramer; may further associate as a homohexadecamer. It depends on Mg(2+) as a cofactor. Specific enzymatic cleavages by the viral protease yield mature proteins. The protease is released by autocatalytic cleavage. The polyprotein is cleaved during and after budding, this process is termed maturation. Proteolytic cleavage of p66 RT removes the RNase H domain to yield the p51 RT subunit. Post-translationally, capsid protein p24 is phosphorylated.

It is found in the virion. Its subcellular location is the host nucleus. The protein resides in the host cytoplasm. It localises to the host cell membrane. It catalyses the reaction Specific for a P1 residue that is hydrophobic, and P1' variable, but often Pro.. It carries out the reaction Endohydrolysis of RNA in RNA/DNA hybrids. Three different cleavage modes: 1. sequence-specific internal cleavage of RNA. Human immunodeficiency virus type 1 and Moloney murine leukemia virus enzymes prefer to cleave the RNA strand one nucleotide away from the RNA-DNA junction. 2. RNA 5'-end directed cleavage 13-19 nucleotides from the RNA end. 3. DNA 3'-end directed cleavage 15-20 nucleotides away from the primer terminus.. The enzyme catalyses 3'-end directed exonucleolytic cleavage of viral RNA-DNA hybrid.. The catalysed reaction is DNA(n) + a 2'-deoxyribonucleoside 5'-triphosphate = DNA(n+1) + diphosphate. Its activity is regulated as follows. The viral protease is inhibited by many synthetic protease inhibitors (PIs), such as amprenavir, atazanavir, indinavir, loprinavir, nelfinavir, ritonavir and saquinavir. RT can be inhibited either by nucleoside RT inhibitors (NRTIs) or by non nucleoside RT inhibitors (NNRTIs). NRTIs act as chain terminators, whereas NNRTIs inhibit DNA polymerization by binding a small hydrophobic pocket near the RT active site and inducing an allosteric change in this region. Classical NRTIs are abacavir, adefovir (PMEA), didanosine (ddI), lamivudine (3TC), stavudine (d4T), tenofovir (PMPA), zalcitabine (ddC), and zidovudine (AZT). Classical NNRTIs are atevirdine (BHAP U-87201E), delavirdine, efavirenz (DMP-266), emivirine (I-EBU), and nevirapine (BI-RG-587). The tritherapies used as a basic effective treatment of AIDS associate two NRTIs and one NNRTI. Use of protease inhibitors in tritherapy regimens permit more ambitious therapeutic strategies. In terms of biological role, gag-Pol polyprotein and Gag polyprotein may regulate their own translation, by the binding genomic RNA in the 5'-UTR. At low concentration, Gag-Pol and Gag would promote translation, whereas at high concentration, the polyproteins encapsidate genomic RNA and then shut off translation. Matrix protein p17 has two main functions: in infected cell, it targets Gag and Gag-pol polyproteins to the plasma membrane via a multipartite membrane-binding signal, that includes its myristointegration complex. The myristoylation signal and the NLS exert conflicting influences its subcellular localization. The key regulation of these motifs might be phosphorylation of a portion of MA molecules on the C-terminal tyrosine at the time of virus maturation, by virion-associated cellular tyrosine kinase. Implicated in the release from host cell mediated by Vpu. Functionally, capsid protein p24 forms the conical core that encapsulates the genomic RNA-nucleocapsid complex in the virion. The core is constituted by capsid protein hexamer subunits. The core is disassembled soon after virion entry. Interaction with host PPIA/CYPA protects the virus from restriction by host TRIM5-alpha and from an unknown antiviral activity in host cells. This capsid restriction by TRIM5 is one of the factors which restricts SIV to the simian species. Its function is as follows. Nucleocapsid protein p7 encapsulates and protects viral dimeric unspliced (genomic) RNA. Binds these RNAs through its zinc fingers. Facilitates rearangement of nucleic acid secondary structure during retrotranscription of genomic RNA. This capability is referred to as nucleic acid chaperone activity. In terms of biological role, the aspartyl protease mediates proteolytic cleavages of Gag and Gag-Pol polyproteins during or shortly after the release of the virion from the plasma membrane. Cleavages take place as an ordered, step-wise cascade to yield mature proteins. This process is called maturation. Displays maximal activity during the budding process just prior to particle release from the cell. Also cleaves Nef and Vif, probably concomitantly with viral structural proteins on maturation of virus particles. Hydrolyzes host EIF4GI and PABP1 in order to shut off the capped cellular mRNA translation. The resulting inhibition of cellular protein synthesis serves to ensure maximal viral gene expression and to evade host immune response. Reverse transcriptase/ribonuclease H (RT) is a multifunctional enzyme that converts the viral dimeric RNA genome into dsDNA in the cytoplasm, shortly after virus entry into the cell. This enzyme displays a DNA polymerase activity that can copy either DNA or RNA templates, and a ribonuclease H (RNase H) activity that cleaves the RNA strand of RNA-DNA heteroduplexes in a partially processive 3' to 5' endonucleasic mode. Conversion of viral genomic RNA into dsDNA requires many steps. A tRNA binds to the primer-binding site (PBS) situated at the 5'-end of the viral RNA. RT uses the 3' end of the tRNA primer to perform a short round of RNA-dependent minus-strand DNA synthesis. The reading proceeds through the U5 region and ends after the repeated (R) region which is present at both ends of viral RNA. The portion of the RNA-DNA heteroduplex is digested by the RNase H, resulting in a ssDNA product attached to the tRNA primer. This ssDNA/tRNA hybridizes with the identical R region situated at the 3' end of viral RNA. This template exchange, known as minus-strand DNA strong stop transfer, can be either intra- or intermolecular. RT uses the 3' end of this newly synthesized short ssDNA to perform the RNA-dependent minus-strand DNA synthesis of the whole template. RNase H digests the RNA template except for two polypurine tracts (PPTs) situated at the 5'-end and near the center of the genome. It is not clear if both polymerase and RNase H activities are simultaneous. RNase H can probably proceed both in a polymerase-dependent (RNA cut into small fragments by the same RT performing DNA synthesis) and a polymerase-independent mode (cleavage of remaining RNA fragments by free RTs). Secondly, RT performs DNA-directed plus-strand DNA synthesis using the PPTs that have not been removed by RNase H as primers. PPTs and tRNA primers are then removed by RNase H. The 3' and 5' ssDNA PBS regions hybridize to form a circular dsDNA intermediate. Strand displacement synthesis by RT to the PBS and PPT ends produces a blunt ended, linear dsDNA copy of the viral genome that includes long terminal repeats (LTRs) at both ends. Functionally, integrase catalyzes viral DNA integration into the host chromosome, by performing a series of DNA cutting and joining reactions. This enzyme activity takes place after virion entry into a cell and reverse transcription of the RNA genome in dsDNA. The first step in the integration process is 3' processing. This step requires a complex comprising the viral genome, matrix protein, Vpr and integrase. This complex is called the pre-integration complex (PIC). The integrase protein removes 2 nucleotides from each 3' end of the viral DNA, leaving recessed CA OH's at the 3' ends. In the second step, the PIC enters cell nucleus. This process is mediated through integrase and Vpr proteins, and allows the virus to infect a non dividing cell. This ability to enter the nucleus is specific of lentiviruses, other retroviruses cannot and rely on cell division to access cell chromosomes. In the third step, termed strand transfer, the integrase protein joins the previously processed 3' ends to the 5' ends of strands of target cellular DNA at the site of integration. The 5'-ends are produced by integrase-catalyzed staggered cuts, 5 bp apart. A Y-shaped, gapped, recombination intermediate results, with the 5'-ends of the viral DNA strands and the 3' ends of target DNA strands remaining unjoined, flanking a gap of 5 bp. The last step is viral DNA integration into host chromosome. This involves host DNA repair synthesis in which the 5 bp gaps between the unjoined strands are filled in and then ligated. Since this process occurs at both cuts flanking the SIV genome, a 5 bp duplication of host DNA is produced at the ends of SIV integration. Alternatively, Integrase may catalyze the excision of viral DNA just after strand transfer, this is termed disintegration. The chain is Gag-Pol polyprotein (gag-pol) from Cercopithecidae (Old World monkeys).